A 1017-amino-acid chain; its full sequence is DNA polymerase (1017 aa).

The protein belongs to the DNA polymerase type-B family. As to quaternary structure, heterodimer with the terminal protein; this heterodimer binds to bp 9 to 18 of the genome. Forms a complex with viral pTP, DBP and hosts NFIA and POU2F1/OCT1 for initiation of replication.

It localises to the host nucleus. It carries out the reaction DNA(n) + a 2'-deoxyribonucleoside 5'-triphosphate = DNA(n+1) + diphosphate. In terms of biological role, eukaryotic-type DNA polymerase involved in viral genomic replication. DNA synthesis is protein primed, and acts in a strand displacement replication. Assembles in complex with viral pTP, DBP, host NFIA and host POU2F1/OCT1 on viral origin of replication. The polymerase covalently transfers dCMP onto pTP, thereby initiating complementary strand synthesis. The chain is DNA polymerase from Bovine adenovirus 2 (BAdV-2).